The sequence spans 185 residues: NAD(P)H-dependent FAD/FMN reductase GTNG_3158 (185 aa).

In terms of assembly, anthranilate 3-monooxygenase consists of a reductase component (GTNG_3158) and an oxygenase component HpaH.

The catalysed reaction is FADH2 + NAD(+) = FAD + NADH + 2 H(+). It catalyses the reaction FADH2 + NADP(+) = FAD + NADPH + 2 H(+). Its function is as follows. Involved in the pathway of tryptophan degradation. Reduces FAD/FMN to FADH(2)/FMNH(2), which are subsequently used for the hydroxylation of anthranilate. It can reduce either FAD or flavin mononucleotide (FMN) but prefers FAD. The enzyme has a slight preference for NADPH as acceptor. In Geobacillus thermodenitrificans (strain NG80-2), this protein is NAD(P)H-dependent FAD/FMN reductase GTNG_3158.